The following is a 685-amino-acid chain: Putative protein FAR1-RELATED SEQUENCE 10 (685 aa).

In terms of domain architecture, FAR1 spans 69–161 (EYYSTFARKS…SNVHNHELLE (93 aa)). The region spanning 292-388 (VVVFDTSYRS…FMSHIVSKLA (97 aa)) is the MULE domain. An SWIM-type zinc finger spans residues 565–603 (GECCVIWNPENEEIQCSCKEFEHSGILCRHTLRVLTVKN).

This sequence belongs to the FHY3/FAR1 family.

The polypeptide is Putative protein FAR1-RELATED SEQUENCE 10 (FRS10) (Arabidopsis thaliana (Mouse-ear cress)).